Reading from the N-terminus, the 20-residue chain is Brevinin-1LT (20 aa).

Cys14 and Cys20 form a disulfide bridge.

Expressed by the skin glands.

The protein resides in the secreted. Its function is as follows. Antimicrobial peptide. The sequence is that of Brevinin-1LT from Rana latastei (Italian agile frog).